The following is a 447-amino-acid chain: Elongation factor 1-alpha (447 aa).

A tr-type G domain is found at 5–230; it reads KTHINIVVIG…DQINEPKRPS (226 aa). Residues 14 to 21 form a G1 region; the sequence is GHVDSGKS. A GTP-binding site is contributed by 14 to 21; the sequence is GHVDSGKS. Residue Lys-55 is modified to N6,N6-dimethyllysine. The interval 70 to 74 is G2; the sequence is GITID. N6,N6,N6-trimethyllysine is present on Lys-79. A G3 region spans residues 91 to 94; the sequence is DAPG. Residues 91–95 and 153–156 each bind GTP; these read DAPGH and NKMD. A G4 region spans residues 153 to 156; the sequence is NKMD. Position 187 is an N6,N6,N6-trimethyllysine (Lys-187). The segment at 194-196 is G5; it reads SGF. Lys-261 bears the N6-methyllysine mark. 5-glutamyl glycerylphosphorylethanolamine is present on Glu-289. At Lys-306 the chain carries N6,N6,N6-trimethyllysine. Position 362 is a 5-glutamyl glycerylphosphorylethanolamine (Glu-362). Position 396 is an N6,N6,N6-trimethyllysine (Lys-396).

The protein belongs to the TRAFAC class translation factor GTPase superfamily. Classic translation factor GTPase family. EF-Tu/EF-1A subfamily.

Its subcellular location is the cytoplasm. Functionally, this protein promotes the GTP-dependent binding of aminoacyl-tRNA to the A-site of ribosomes during protein biosynthesis. The protein is Elongation factor 1-alpha (REFA1) of Oryza sativa subsp. japonica (Rice).